The chain runs to 437 residues: O-methyltransferase elcB (437 aa).

Residue D269 participates in S-adenosyl-L-methionine binding. H319 functions as the Proton acceptor in the catalytic mechanism.

It belongs to the class I-like SAM-binding methyltransferase superfamily. Cation-independent O-methyltransferase family. COMT subfamily.

Its pathway is secondary metabolite biosynthesis. O-methyltransferase; part of the gene cluster that mediates the biosynthesis of elsinochrome C, a perelyenequinone phytotoxin structurally similar to cercosporin. The first step of elsinochrome C biosynthesis is performed by the polyketide synthase elcA which catalyzes the formation of nor-toralactone. The starter unit acyltransferase (SAT) domain of elcA initiates polyketide extension by the selective utilization of acetyl-CoA, which is elongated to the heptaketide in the beta-ketoacyl synthase (KS) domain by successive condensations with six malonyl units introduced by the malonyl acyltransferase (MAT) domain. The product template (PT) domain catalyzes C4-C9 and C2-C11 aldol cyclizations and dehydrations to a trihydroxynaphthalene, which is thought to be delivered to the thioesterase (TE) domain for product release. The bifunctional enzyme elcB then methylates nor-toralactone to toralactone before conducting an unusual oxidative aromatic ring opening. The next step in perylenequinone biosynthesis is an O-methylation at the nascent OH-6 of the elcB product performed by the O-methyltransferase elcD. The oxidative coupling of the two monomeric naphthol units in perylenequinone biosynthesis is catalyzed by the FAD-dependent monooxygenase elcE and the multicopper oxidase elcG. ElcG might catalyze the first intermolecular coupling in a regio- and stereo-selective manner via a phenol radical coupling mechanism and the elcE could forge the second C-C bond intramolecularly via a hydride transfer mechanism. The fasciclin domain-containing protein elcF might also play a role duting this step. The last piece of the puzzle in the biosynthesis of elsinochrome C is the additional annulation by enolate coupling to afford the dihydrobenzo(ghi)perylenequinone system, catalyzed by the FAD-dependent monooxygenase elcH. This is O-methyltransferase elcB from Phaeosphaeria nodorum (strain SN15 / ATCC MYA-4574 / FGSC 10173) (Glume blotch fungus).